Reading from the N-terminus, the 547-residue chain is Probable bifunctional tRNA threonylcarbamoyladenosine biosynthesis protein (547 aa).

The kae1 stretch occupies residues 1–329 (MDTSKDLICI…YRSDMVEVNW (329 aa)). H112, H116, and Y133 together coordinate Fe cation. L-threonylcarbamoyladenylate-binding positions include 133 to 137 (YVSGG), D165, G178, E182, and N262. D290 is a Fe cation binding site. Positions 346–547 (IIPEHLIGKG…KEVEKRARYL (202 aa)) constitute a Protein kinase domain. ATP-binding positions include 352–360 (IGKGAEADI) and K373. The active-site Proton acceptor; for kinase activity is D465.

In the N-terminal section; belongs to the KAE1 / TsaD family. The protein in the C-terminal section; belongs to the protein kinase superfamily. Tyr protein kinase family. BUD32 subfamily. Component of the KEOPS complex that consists of Kae1, Bud32, Cgi121 and Pcc1; the whole complex dimerizes. Requires Fe(2+) as cofactor.

Its subcellular location is the cytoplasm. It catalyses the reaction L-seryl-[protein] + ATP = O-phospho-L-seryl-[protein] + ADP + H(+). The enzyme catalyses L-threonyl-[protein] + ATP = O-phospho-L-threonyl-[protein] + ADP + H(+). The catalysed reaction is L-threonylcarbamoyladenylate + adenosine(37) in tRNA = N(6)-L-threonylcarbamoyladenosine(37) in tRNA + AMP + H(+). Functionally, required for the formation of a threonylcarbamoyl group on adenosine at position 37 (t(6)A37) in tRNAs that read codons beginning with adenine. Is a component of the KEOPS complex that is probably involved in the transfer of the threonylcarbamoyl moiety of threonylcarbamoyl-AMP (TC-AMP) to the N6 group of A37. The Kae1 domain likely plays a direct catalytic role in this reaction. The Bud32 domain probably displays kinase activity that regulates Kae1 function. The protein is Probable bifunctional tRNA threonylcarbamoyladenosine biosynthesis protein of Methanococcus maripaludis (strain C7 / ATCC BAA-1331).